Consider the following 49-residue polypeptide: U3-plectoxin-Pt1a (49 aa).

5 disulfide bridges follow: Cys-2/Cys-16, Cys-9/Cys-30, Cys-15/Cys-41, Cys-32/Cys-39, and Cys-45/Cys-49.

As to expression, expressed by the venom gland.

Its subcellular location is the secreted. Functionally, potent toxin that may paralyze and/or kill insect pests such as H.virescens (lepidoptera), S.exigua (beet armyworm) and M.sexta (tobacco hornworm). This chain is U3-plectoxin-Pt1a, found in Plectreurys tristis (Spider).